Here is a 245-residue protein sequence, read N- to C-terminus: 4-hydroxy-tetrahydrodipicolinate reductase (245 aa).

NAD(+) contacts are provided by residues 7–12 (GAKGKV), 75–77 (GTT), and 102–105 (APNF). H132 (proton donor/acceptor) is an active-site residue. H133 contributes to the (S)-2,3,4,5-tetrahydrodipicolinate binding site. K136 serves as the catalytic Proton donor. 142 to 143 (GT) provides a ligand contact to (S)-2,3,4,5-tetrahydrodipicolinate.

It belongs to the DapB family.

It localises to the cytoplasm. The catalysed reaction is (S)-2,3,4,5-tetrahydrodipicolinate + NAD(+) + H2O = (2S,4S)-4-hydroxy-2,3,4,5-tetrahydrodipicolinate + NADH + H(+). The enzyme catalyses (S)-2,3,4,5-tetrahydrodipicolinate + NADP(+) + H2O = (2S,4S)-4-hydroxy-2,3,4,5-tetrahydrodipicolinate + NADPH + H(+). It participates in amino-acid biosynthesis; L-lysine biosynthesis via DAP pathway; (S)-tetrahydrodipicolinate from L-aspartate: step 4/4. Its function is as follows. Catalyzes the conversion of 4-hydroxy-tetrahydrodipicolinate (HTPA) to tetrahydrodipicolinate. The protein is 4-hydroxy-tetrahydrodipicolinate reductase of Mycolicibacterium gilvum (strain PYR-GCK) (Mycobacterium gilvum (strain PYR-GCK)).